A 185-amino-acid chain; its full sequence is FK506-binding protein 2 (185 aa).

The first 20 residues, 1–20 (MQGLLLSLSLLASAAVGVLA), serve as a signal peptide directing secretion. In terms of domain architecture, PPIase FKBP-type spans 41–129 (GDKINVHYKG…VFETELVGIE (89 aa)). The short motif at 182–185 (HNEL) is the Prevents secretion from ER element.

Belongs to the FKBP-type PPIase family. FKBP2 subfamily.

The protein resides in the endoplasmic reticulum. It catalyses the reaction [protein]-peptidylproline (omega=180) = [protein]-peptidylproline (omega=0). With respect to regulation, inhibited by both FK506 and rapamycin. Functionally, PPIases accelerate the folding of proteins. It catalyzes the cis-trans isomerization of proline imidic peptide bonds in oligopeptides. In Podospora anserina (Pleurage anserina), this protein is FK506-binding protein 2 (FPR2).